The chain runs to 180 residues: 2-oxoglutarate dehydrogenase, mitochondrial (180 aa).

Position 14 is an N6-succinyllysine (lysine 14). Phosphoserine is present on serine 40. A thiamine diphosphate-binding site is contributed by arginine 64.

The protein belongs to the alpha-ketoglutarate dehydrogenase family. In terms of assembly, homodimer. The 2-oxoglutarate dehydrogenase complex is composed of OGDH (2-oxoglutarate dehydrogenase; E1), DLST (dihydrolipoamide succinyltransferase; E2) and DLD (dihydrolipoamide dehydrogenase; E3). It contains multiple copies of the three enzymatic components (E1, E2 and E3). In the nucleus, the 2-oxoglutarate dehydrogenase complex associates with KAT2A. Interacts with ABHD11; this interaction maintains the functional lipoylation of the 2-oxoglutarate dehydrogenase complex. The cofactor is thiamine diphosphate. Mg(2+) serves as cofactor.

It is found in the mitochondrion matrix. The protein resides in the nucleus. The enzyme catalyses N(6)-[(R)-lipoyl]-L-lysyl-[protein] + 2-oxoglutarate + H(+) = N(6)-[(R)-S(8)-succinyldihydrolipoyl]-L-lysyl-[protein] + CO2. Its activity is regulated as follows. Calcium ions and ADP stimulate, whereas ATP and NADH reduce catalytic activity. 2-oxoglutarate dehydrogenase (E1) component of the 2-oxoglutarate dehydrogenase complex (OGDHC), which mediates the decarboxylation of alpha-ketoglutarate. The 2-oxoglutarate dehydrogenase complex catalyzes the overall conversion of 2-oxoglutarate to succinyl-CoA and CO(2). The 2-oxoglutarate dehydrogenase complex is mainly active in the mitochondrion. A fraction of the 2-oxoglutarate dehydrogenase complex also localizes in the nucleus and is required for lysine succinylation of histones: associates with KAT2A on chromatin and provides succinyl-CoA to histone succinyltransferase KAT2A. This chain is 2-oxoglutarate dehydrogenase, mitochondrial, found in Mesocricetus auratus (Golden hamster).